We begin with the raw amino-acid sequence, 247 residues long: Probable cyclic nucleotide phosphodiesterase XBJ1_0953 (247 aa).

Fe cation contacts are provided by D8, H10, D52, N82, H154, H192, and H194. AMP is bound by residues H10, D52, and 82–83 (NH). H194 contacts AMP.

It belongs to the cyclic nucleotide phosphodiesterase class-III family. It depends on Fe(2+) as a cofactor.

This is Probable cyclic nucleotide phosphodiesterase XBJ1_0953 from Xenorhabdus bovienii (strain SS-2004) (Xenorhabdus nematophila subsp. bovienii).